The sequence spans 112 residues: Ribosome-binding factor A (112 aa).

The protein belongs to the RbfA family. In terms of assembly, monomer. Binds 30S ribosomal subunits, but not 50S ribosomal subunits or 70S ribosomes.

It localises to the cytoplasm. One of several proteins that assist in the late maturation steps of the functional core of the 30S ribosomal subunit. Associates with free 30S ribosomal subunits (but not with 30S subunits that are part of 70S ribosomes or polysomes). Required for efficient processing of 16S rRNA. May interact with the 5'-terminal helix region of 16S rRNA. This is Ribosome-binding factor A from Mycoplasma genitalium (strain ATCC 33530 / DSM 19775 / NCTC 10195 / G37) (Mycoplasmoides genitalium).